The following is a 164-amino-acid chain: Glutamate uptake regulatory protein (164 aa).

Residues 5–66 form the HTH asnC-type domain; that stretch reads LDDFDIKILD…LLDPQKIGLG (62 aa). Positions 24-43 form a DNA-binding region, H-T-H motif; the sequence is MAELSEKTGLSANACWRRIR.

In terms of biological role, represses the secondary, H(+)-coupled glutamate uptake system (Gluemp) genes. The polypeptide is Glutamate uptake regulatory protein (grp) (Zymomonas mobilis subsp. mobilis (strain ATCC 31821 / ZM4 / CP4)).